Here is a 757-residue protein sequence, read N- to C-terminus: Glutathione biosynthesis bifunctional protein GshAB (757 aa).

A glutamate--cysteine ligase region spans residues 1–337 (MKIQHIIHEN…LGKARLAEVA (337 aa)). The ATP-grasp domain maps to 494–753 (KKVLQKAGFN…LTQNVIKMLF (260 aa)). 521 to 580 (ALFENRAVVIKPKSTNYGLGITIFQQGVQNREDFAKALEIAFREDKEVMVEDYLVGTEYR) lines the ATP pocket. Aspartate 702, glutamate 723, and asparagine 725 together coordinate Mg(2+). Mn(2+) is bound by residues aspartate 702, glutamate 723, and asparagine 725.

It in the N-terminal section; belongs to the glutamate--cysteine ligase type 1 family. Type 2 subfamily. As to quaternary structure, monomer. Requires Mg(2+) as cofactor. It depends on Mn(2+) as a cofactor.

It carries out the reaction L-cysteine + L-glutamate + ATP = gamma-L-glutamyl-L-cysteine + ADP + phosphate + H(+). The enzyme catalyses gamma-L-glutamyl-L-cysteine + glycine + ATP = glutathione + ADP + phosphate + H(+). The protein operates within sulfur metabolism; glutathione biosynthesis; glutathione from L-cysteine and L-glutamate: step 1/2. Its pathway is sulfur metabolism; glutathione biosynthesis; glutathione from L-cysteine and L-glutamate: step 2/2. Functionally, synthesizes glutathione from L-glutamate and L-cysteine via gamma-L-glutamyl-L-cysteine. This is Glutathione biosynthesis bifunctional protein GshAB from Pasteurella multocida (strain Pm70).